We begin with the raw amino-acid sequence, 279 residues long: Oxygen-dependent coproporphyrinogen-III oxidase (279 aa).

Residue S102 coordinates substrate. A divalent metal cation is bound by residues H106 and H116. The Proton donor role is filled by H116. 118-120 is a binding site for substrate; sequence NTR. Positions 149 and 179 each coordinate a divalent metal cation. The tract at residues 244-279 is important for dimerization; it reads YVEFNLLYDRGTKFGLMTDGNVEAILMSLPPEVKFN.

It belongs to the aerobic coproporphyrinogen-III oxidase family. In terms of assembly, homodimer. A divalent metal cation is required as a cofactor.

It localises to the cytoplasm. It carries out the reaction coproporphyrinogen III + O2 + 2 H(+) = protoporphyrinogen IX + 2 CO2 + 2 H2O. It functions in the pathway porphyrin-containing compound metabolism; protoporphyrin-IX biosynthesis; protoporphyrinogen-IX from coproporphyrinogen-III (O2 route): step 1/1. Functionally, involved in the heme biosynthesis. Catalyzes the aerobic oxidative decarboxylation of propionate groups of rings A and B of coproporphyrinogen-III to yield the vinyl groups in protoporphyrinogen-IX. This chain is Oxygen-dependent coproporphyrinogen-III oxidase, found in Rickettsia africae (strain ESF-5).